The primary structure comprises 577 residues: Moesin (577 aa).

Residues 2–295 (PKTISVRVTT…GNHELYMRRR (294 aa)) form the FERM domain. The residue at position 74 (Ser74) is a Phosphoserine. At Lys79 the chain carries N6-acetyllysine. Lys83 is modified (N6-succinyllysine). The [IL]-x-C-x-x-[DE] motif signature appears at 115 to 120 (IYCPPE). Position 116 is a phosphotyrosine (Tyr116). The residue at position 117 (Cys117) is an S-nitrosocysteine. An N6-acetyllysine mark is found at Lys139 and Lys165. Disordered regions lie at residues 322–342 (LLEN…KIER), 358–419 (TKKA…QLAS), and 468–518 (STPH…NERV). The span at 358-401 (TKKAQQELEEQTRRALELEQERKRAQSEAEKLAKERQEAEEAKE) shows a compositional bias: basic and acidic residues. Position 407 is a phosphoserine (Ser407). Basic and acidic residues predominate over residues 492-518 (AELRADAMAKDRSEEERTTEAEKNERV). Ser527 bears the Phosphoserine mark. Thr558 is subject to Phosphothreonine; by ROCK2 and STK10.

As to quaternary structure, in resting T-cells, part of a PAG1-NHERF1-MSN complex which is disrupted upon TCR activation. Interacts with NHERF1. Interacts with PPP1R16B. Interacts with SELPLG and SYK; these interactions mediate the activation of SYK by SELPLG. Interacts with PDPN (via cytoplasmic domain); this interaction activates RHOA and promotes epithelial-mesenchymal transition. Interacts with SPN/CD43 cytoplasmic tail. Interacts with CD44. Interacts with ICAM2. Interacts with ICAM3 (via C-terminus). Interacts with PDZD8. Interacts with F-actin. Interacts with CD46. Interacts with PTPN6. In terms of processing, phosphorylation on Thr-558 by STK10 negatively regulates lymphocyte migration and polarization. Phosphorylation on Thr-558 is crucial for the formation of microvilli-like structures. Phosphorylation by ROCK2 suppresses the head-to-tail association of the N-terminal and C-terminal halves resulting in an opened conformation which is capable of actin and membrane-binding. Post-translationally, S-nitrosylation of Cys-117 is induced by interferon-gamma and oxidatively-modified low-densitity lipoprotein (LDL(ox)) implicating the iNOS-S100A8/9 transnitrosylase complex.

The protein resides in the cell membrane. The protein localises to the cytoplasm. It is found in the cytoskeleton. Its subcellular location is the apical cell membrane. It localises to the cell projection. The protein resides in the microvillus membrane. The protein localises to the microvillus. Functionally, ezrin-radixin-moesin (ERM) family protein that connects the actin cytoskeleton to the plasma membrane and thereby regulates the structure and function of specific domains of the cell cortex. Tethers actin filaments by oscillating between a resting and an activated state providing transient interactions between moesin and the actin cytoskeleton. Once phosphorylated on its C-terminal threonine, moesin is activated leading to interaction with F-actin and cytoskeletal rearrangement. These rearrangements regulate many cellular processes, including cell shape determination, membrane transport, and signal transduction. The role of moesin is particularly important in immunity acting on both T and B-cells homeostasis and self-tolerance, regulating lymphocyte egress from lymphoid organs. Modulates phagolysosomal biogenesis in macrophages. Also participates in immunologic synapse formation. The protein is Moesin of Mus musculus (Mouse).